Here is a 354-residue protein sequence, read N- to C-terminus: 3-isopropylmalate dehydrogenase (354 aa).

76 to 87 (GPRWDGAKERPE) serves as a coordination point for NAD(+). R94, R104, R130, and D215 together coordinate substrate. Mg(2+) is bound by residues D215, D239, and D243. 273–285 (GSAPDIAGKNKAN) is an NAD(+) binding site.

This sequence belongs to the isocitrate and isopropylmalate dehydrogenases family. LeuB type 1 subfamily. In terms of assembly, homodimer. Requires Mg(2+) as cofactor. Mn(2+) serves as cofactor.

It is found in the cytoplasm. The enzyme catalyses (2R,3S)-3-isopropylmalate + NAD(+) = 4-methyl-2-oxopentanoate + CO2 + NADH. It functions in the pathway amino-acid biosynthesis; L-leucine biosynthesis; L-leucine from 3-methyl-2-oxobutanoate: step 3/4. In terms of biological role, catalyzes the oxidation of 3-carboxy-2-hydroxy-4-methylpentanoate (3-isopropylmalate) to 3-carboxy-4-methyl-2-oxopentanoate. The product decarboxylates to 4-methyl-2 oxopentanoate. The chain is 3-isopropylmalate dehydrogenase from Bacillus cereus (strain ZK / E33L).